The sequence spans 296 residues: Protoheme IX farnesyltransferase (296 aa).

The next 9 membrane-spanning stretches (helical) occupy residues I14 to I34, Y36 to F56, V75 to I95, L99 to I119, V133 to A153, L163 to F183, I209 to A229, L234 to A254, and F265 to V285.

It belongs to the UbiA prenyltransferase family. Protoheme IX farnesyltransferase subfamily.

It localises to the cell inner membrane. The enzyme catalyses heme b + (2E,6E)-farnesyl diphosphate + H2O = Fe(II)-heme o + diphosphate. It participates in porphyrin-containing compound metabolism; heme O biosynthesis; heme O from protoheme: step 1/1. Converts heme B (protoheme IX) to heme O by substitution of the vinyl group on carbon 2 of heme B porphyrin ring with a hydroxyethyl farnesyl side group. This chain is Protoheme IX farnesyltransferase, found in Yersinia enterocolitica serotype O:8 / biotype 1B (strain NCTC 13174 / 8081).